Reading from the N-terminus, the 524-residue chain is Phosphoenolpyruvate carboxykinase (ATP) (524 aa).

Residues R52, Y188, and K194 each contribute to the substrate site. Residues K194, H213, and G229–T237 contribute to the ATP site. K194 and H213 together coordinate Mn(2+). Mn(2+) is bound at residue D250. The ATP site is built by E278, R314, and T439. Position 314 (R314) interacts with substrate.

The protein belongs to the phosphoenolpyruvate carboxykinase (ATP) family. Mn(2+) is required as a cofactor.

It is found in the cytoplasm. It catalyses the reaction oxaloacetate + ATP = phosphoenolpyruvate + ADP + CO2. Its pathway is carbohydrate biosynthesis; gluconeogenesis. Functionally, involved in the gluconeogenesis. Catalyzes the conversion of oxaloacetate (OAA) to phosphoenolpyruvate (PEP) through direct phosphoryl transfer between the nucleoside triphosphate and OAA. The sequence is that of Phosphoenolpyruvate carboxykinase (ATP) from Campylobacter lari (strain RM2100 / D67 / ATCC BAA-1060).